We begin with the raw amino-acid sequence, 440 residues long: Xylose isomerase (440 aa).

Active-site residues include H101 and D104. Mg(2+) contacts are provided by E232, E268, H271, D296, D307, D309, and D339.

It belongs to the xylose isomerase family. As to quaternary structure, homotetramer. Requires Mg(2+) as cofactor.

It is found in the cytoplasm. The catalysed reaction is alpha-D-xylose = alpha-D-xylulofuranose. This Cronobacter sakazakii (strain ATCC BAA-894) (Enterobacter sakazakii) protein is Xylose isomerase.